A 498-amino-acid chain; its full sequence is Probable cytosol aminopeptidase (498 aa).

Mn(2+) is bound by residues Lys-264 and Asp-269. The active site involves Lys-276. 3 residues coordinate Mn(2+): Asp-287, Asp-346, and Glu-348. Arg-350 is a catalytic residue.

It belongs to the peptidase M17 family. Requires Mn(2+) as cofactor.

The protein localises to the cytoplasm. It catalyses the reaction Release of an N-terminal amino acid, Xaa-|-Yaa-, in which Xaa is preferably Leu, but may be other amino acids including Pro although not Arg or Lys, and Yaa may be Pro. Amino acid amides and methyl esters are also readily hydrolyzed, but rates on arylamides are exceedingly low.. It carries out the reaction Release of an N-terminal amino acid, preferentially leucine, but not glutamic or aspartic acids.. In terms of biological role, presumably involved in the processing and regular turnover of intracellular proteins. Catalyzes the removal of unsubstituted N-terminal amino acids from various peptides. The chain is Probable cytosol aminopeptidase from Xanthobacter autotrophicus (strain ATCC BAA-1158 / Py2).